Here is a 472-residue protein sequence, read N- to C-terminus: NADH-quinone oxidoreductase subunit N 2 (472 aa).

The next 13 membrane-spanning stretches (helical) occupy residues 3 to 23 (WMSF…LLLS), 34 to 54 (HVAA…SVGA), 67 to 87 (LFSQ…VTLC), 106 to 126 (FVCT…VVFI), 156 to 176 (FLVG…LYGA), 198 to 218 (VVIG…VFPF), 233 to 253 (VSAY…VRVI), 263 to 283 (LVHV…LAAI), 291 to 311 (LLAY…LSMN), 317 to 337 (AAVF…LVLV), 360 to 380 (ILAL…PTVG), 398 to 418 (TLVL…LLVI), and 441 to 461 (LLSG…NQII).

It belongs to the complex I subunit 2 family. As to quaternary structure, NDH-1 is composed of 14 different subunits. Subunits NuoA, H, J, K, L, M, N constitute the membrane sector of the complex.

It localises to the cell inner membrane. It carries out the reaction a quinone + NADH + 5 H(+)(in) = a quinol + NAD(+) + 4 H(+)(out). Its function is as follows. NDH-1 shuttles electrons from NADH, via FMN and iron-sulfur (Fe-S) centers, to quinones in the respiratory chain. The immediate electron acceptor for the enzyme in this species is believed to be ubiquinone. Couples the redox reaction to proton translocation (for every two electrons transferred, four hydrogen ions are translocated across the cytoplasmic membrane), and thus conserves the redox energy in a proton gradient. This is NADH-quinone oxidoreductase subunit N 2 from Syntrophobacter fumaroxidans (strain DSM 10017 / MPOB).